Reading from the N-terminus, the 512-residue chain is Rab11 family-interacting protein 2 (512 aa).

Positions 1-120 (MMLSEQAQKW…DKQRRKTEWF (120 aa)) constitute a C2 domain. A necessary for its cellular translocation to the plasma membrane region spans residues 15 to 102 (VQVTVLQAKD…GLDKFLGQVA (88 aa)). Disordered regions lie at residues 169 to 239 (DKMK…MSSE) and 262 to 285 (VPESGSLKSPHRRTLSFDTSKMNQ). Over residues 178 to 188 (GTFSDTSSAII) the composition is skewed to polar residues. The segment covering 226–236 (HSMSDLSGSHM) has biased composition (low complexity). The residue at position 227 (Ser227) is a Phosphoserine; by MARK2. Ser277 carries the phosphoserine modification. The short motif at 323–325 (NPF) is the NPF 1 element. The segment covering 361–374 (ERVTGKKDSRRSDK) has biased composition (basic and acidic residues). The interval 361 to 392 (ERVTGKKDSRRSDKLNNGGSDSPCDLKSPNAF) is disordered. 2 consecutive short sequence motifs (NPF) follow at residues 406–408 (NPF) and 440–442 (NPF). In terms of domain architecture, FIP-RBD spans 437-499 (PDSNPFDATA…EETPSILRVP (63 aa)). The segment at 465–512 (ELLRRKDTHIRELEDYIDNLLVRVMEETPSILRVPYEPSRKAGKFSNS) is necessary for interaction with AP2A1, RAB11A, subcellular location, endocytosis activity and homooligomerization.

As to quaternary structure, homooligomerizes in a Rab11-independent manner. Forms a heterooligomeric complex with RAB11FIP4. Interacts with AP2A1, MYO5B, RAB25 and REPS1. Interacts with RAB11A and RAB11B (activated GTP-bound form). Interacts with NPC1L1. Interacts (via NPF motifs) with EHD1 and EHD3. Interacts with TICAM2; this interaction directs RAB11FIP2 to the phagosome. Interacts with RAB14 and RAB25 (GTP-bound forms). In terms of processing, phosphorylation at Ser-227 by MARK2 regulates epithelial cell polarity.

It is found in the cell projection. The protein localises to the phagocytic cup. It localises to the cell membrane. Its subcellular location is the recycling endosome membrane. Its function is as follows. A Rab11 effector binding preferentially phosphatidylinositol 3,4,5-trisphosphate (PtdInsP3) and phosphatidic acid (PA) and acting in the regulation of the transport of vesicles from the endosomal recycling compartment (ERC) to the plasma membrane. Involved in insulin granule exocytosis. Also involved in receptor-mediated endocytosis and membrane trafficking of recycling endosomes, probably originating from clathrin-coated vesicles. Required in a complex with MYO5B and RAB11 for the transport of NPC1L1 to the plasma membrane. Also acts as a regulator of cell polarity. Plays an essential role in phagocytosis through a mechanism involving TICAM2, RAC1 and CDC42 Rho GTPases for controlling actin-dynamics. This chain is Rab11 family-interacting protein 2 (RAB11FIP2), found in Homo sapiens (Human).